The primary structure comprises 1007 residues: Serine/threonine-protein kinase PRP4 homolog (1007 aa).

Positions 1–10 (MAAAETQSLR) are enriched in polar residues. The disordered stretch occupies residues 1–99 (MAAAETQSLR…EGMSPAKRTK (99 aa)). Ala-2 carries the N-acetylalanine modification. Phosphoserine occurs at positions 8, 20, 23, and 32. Composition is skewed to basic residues over residues 39–59 (KHSRHKKKKHKHRSKHKKHKH) and 67–81 (KKHKHKHKHKKHKRK). Residues 82–91 (EIIDASDKEG) show a composition bias toward basic and acidic residues. Phosphoserine is present on residues Ser-87 and Ser-93. Lys-99 is modified (N6-acetyllysine; alternate). Residue Lys-99 forms a Glycyl lysine isopeptide (Lys-Gly) (interchain with G-Cter in SUMO2); alternate linkage. Lys-111 is covalently cross-linked (Glycyl lysine isopeptide (Lys-Gly) (interchain with G-Cter in SUMO2)). Lys-117 participates in a covalent cross-link: Glycyl lysine isopeptide (Lys-Gly) (interchain with G-Cter in SUMO2); alternate. Residue Lys-117 forms a Glycyl lysine isopeptide (Lys-Gly) (interchain with G-Cter in SUMO1); alternate linkage. Residue Ser-131 is modified to Phosphoserine. Residue Tyr-140 is modified to Phosphotyrosine. Disordered regions lie at residues 140–533 (YESG…EEED) and 559–583 (SNMSVPSEPSSPQSSTRTRSPSPDD). Phosphoserine is present on residues Ser-142, Ser-144, and Ser-166. Low complexity predominate over residues 157–168 (GNRSSTRSSSTK). Glycyl lysine isopeptide (Lys-Gly) (interchain with G-Cter in SUMO2) cross-links involve residues Lys-170 and Lys-177. 2 stretches are compositionally biased toward basic residues: residues 179–202 (TTKKRSKSRSKERTRHRSDKKKSK) and 214–230 (RSKSKERKKSKSPSKRS). Ser-239, Ser-241, Ser-257, Ser-277, Ser-283, Ser-292, and Ser-294 each carry phosphoserine. Residues 247–270 (RSQEKIGKARSPTDDKVKIEDKSK) show a composition bias toward basic and acidic residues. A compositionally biased stretch (basic residues) spans 302-315 (SKDRRSRSKERKSK). A compositionally biased stretch (basic and acidic residues) spans 316-325 (RSETDKEKKP). Ser-328, Ser-354, Ser-356, Ser-366, and Ser-368 each carry phosphoserine. A compositionally biased stretch (basic residues) spans 342 to 367 (PSRRPGRSPKRRSLSPKPRDKSRRSR). Position 385 is a phosphothreonine (Thr-385). Ser-387 is modified (phosphoserine). Basic and acidic residues-rich tracts occupy residues 395–408 (RSLERKRREPERRR) and 415–429 (RPRDDILSRRERSKD). 3 positions are modified to phosphoserine: Ser-427, Ser-431, and Ser-437. Over residues 438–497 (PTRRRSRSPIRRRSRSPLRRSRSPRRRSRSPRRRDRGRRSRSRLRRRSRSRGGRRRRSRS) the composition is skewed to basic residues. Residues Ser-518, Ser-519, Ser-520, Ser-565, Ser-569, Ser-578, and Ser-580 each carry the phosphoserine modification. Residues 518–533 (SSSDDNLEDFDVEEED) are compositionally biased toward acidic residues. Residues 562–581 (SVPSEPSSPQSSTRTRSPSP) are compositionally biased toward low complexity. Residues Lys-593 and Lys-659 each participate in a glycyl lysine isopeptide (Lys-Gly) (interchain with G-Cter in SUMO2) cross-link. The 320-residue stretch at 687 to 1006 (YNVYGYTGQG…ALQHAFIQEK (320 aa)) folds into the Protein kinase domain. ATP-binding positions include 693-701 (TGQGVFSNV) and Lys-717. Lys-717 carries the N6-acetyllysine modification. The active-site Proton acceptor is Asp-815. The residue at position 849 (Tyr-849) is a Phosphotyrosine. Ser-852 is subject to Phosphoserine.

This sequence belongs to the protein kinase superfamily. CMGC Ser/Thr protein kinase family. Interacts with CLK1 C-terminus. Associates with the U5 snRNP and NCOR1 deacetylase complexes. Identified in the spliceosome C complex. Post-translationally, phosphorylated by CLK1. Autophosphorylated; phosphorylation inhibits interaction with its targets, such as PRPF6 or SMARCA4. As to expression, ubiquitous.

It localises to the nucleus. It is found in the chromosome. The protein localises to the centromere. The protein resides in the kinetochore. It catalyses the reaction L-seryl-[protein] + ATP = O-phospho-L-seryl-[protein] + ADP + H(+). The catalysed reaction is L-threonyl-[protein] + ATP = O-phospho-L-threonyl-[protein] + ADP + H(+). Serine/threonine kinase involved in spliceosomal assembly as well as mitosis and signaling regulation. Connects chromatin mediated regulation of transcription and pre-mRNA splicing. During spliceosomal assembly, interacts with and phosphorylates PRPF6 and PRPF31, components of the U4/U6-U5 tri-small nuclear ribonucleoprotein (snRNP), to facilitate the formation of the spliceosome B complex. Plays a role in regulating transcription and the spindle assembly checkpoint (SAC). Associates with U5 snRNP and NCOR1 deacetylase complexes which may allow a coordination of pre-mRNA splicing with chromatin remodeling events involved in transcriptional regulation. Associates and probably phosphorylates SMARCA4 and NCOR1. Phosphorylates SRSF1. Associates with kinetochores during mitosis and is necessary for recruitment and maintenance of the checkpoint proteins such as MAD1L1 and MAD12L1 at the kinetochores. Phosphorylates and regulates the activity of the transcription factors such as ELK1 and KLF13. Phosphorylates nuclear YAP1 and WWTR1/TAZ which induces nuclear exclusion and regulates Hippo signaling pathway, involved in tissue growth control. The sequence is that of Serine/threonine-protein kinase PRP4 homolog from Homo sapiens (Human).